A 110-amino-acid chain; its full sequence is Holo-[acyl-carrier-protein] synthase (110 aa).

The Mg(2+) site is built by Asp8 and Glu54.

This sequence belongs to the P-Pant transferase superfamily. AcpS family. Mg(2+) is required as a cofactor.

It localises to the cytoplasm. It catalyses the reaction apo-[ACP] + CoA = holo-[ACP] + adenosine 3',5'-bisphosphate + H(+). Transfers the 4'-phosphopantetheine moiety from coenzyme A to a Ser of acyl-carrier-protein. The protein is Holo-[acyl-carrier-protein] synthase of Mycoplasma capricolum subsp. capricolum (strain California kid / ATCC 27343 / NCTC 10154).